An 815-amino-acid chain; its full sequence is Cell division control protein 48 homolog D (815 aa).

Position 2 is an N-acetylalanine (Ala-2). Ser-42 bears the Phosphoserine mark. ATP-binding positions include Gly-249–Thr-256 and Gly-522–Thr-529. A Phosphoserine modification is found at Ser-720. The segment at Gly-772–Ser-815 is disordered. Positions Ala-780 to Val-798 are enriched in low complexity.

It belongs to the AAA ATPase family.

Its subcellular location is the nucleus. It localises to the cytoplasm. The protein resides in the cytoskeleton. The protein localises to the phragmoplast. Functionally, probably functions in cell division and growth processes. Interacts with certain SNAREs as part of specialized membrane fusion events where vesicles from the same organelle fuse (homotypic fusion). The chain is Cell division control protein 48 homolog D (CDC48D) from Arabidopsis thaliana (Mouse-ear cress).